The chain runs to 301 residues: GTP cyclohydrolase FolE2 (301 aa).

It belongs to the GTP cyclohydrolase IV family.

It carries out the reaction GTP + H2O = 7,8-dihydroneopterin 3'-triphosphate + formate + H(+). It participates in cofactor biosynthesis; 7,8-dihydroneopterin triphosphate biosynthesis; 7,8-dihydroneopterin triphosphate from GTP: step 1/1. Converts GTP to 7,8-dihydroneopterin triphosphate. The polypeptide is GTP cyclohydrolase FolE2 (Pseudomonas syringae pv. tomato (strain ATCC BAA-871 / DC3000)).